The following is a 211-amino-acid chain: Rho-related GTP-binding protein RhoF (211 aa).

An N-acetylmethionine modification is found at Met-1. 26–33 serves as a coordination point for GTP; sequence GDGGCGKT. The Effector region signature appears at 48-56; sequence YAPSVFEKY. Residues 73-77 and 131-134 contribute to the GTP site; these read DTAGQ and CKTD. Cys-208 is modified (cysteine methyl ester). Residue Cys-208 is the site of S-geranylgeranyl cysteine attachment. Residues 209 to 211 constitute a propeptide, removed in mature form; the sequence is LLL.

This sequence belongs to the small GTPase superfamily. Rho family.

Its subcellular location is the cell membrane. The protein localises to the cytoplasm. It localises to the cytoskeleton. Plasma membrane-associated small GTPase which cycles between an active GTP-bound and an inactive GDP-bound state. Causes the formation of thin, actin-rich surface projections called filopodia. Functions cooperatively with CDC42 and Rac to generate additional structures, increasing the diversity of actin-based morphology. This chain is Rho-related GTP-binding protein RhoF (Rhof), found in Mus musculus (Mouse).